A 412-amino-acid chain; its full sequence is Serine hydroxymethyltransferase (412 aa).

(6S)-5,6,7,8-tetrahydrofolate-binding positions include Leu117 and 121–123 (GHL). At Lys226 the chain carries N6-(pyridoxal phosphate)lysine. 349-351 (SPF) provides a ligand contact to (6S)-5,6,7,8-tetrahydrofolate.

The protein belongs to the SHMT family. As to quaternary structure, homodimer. It depends on pyridoxal 5'-phosphate as a cofactor.

The protein localises to the cytoplasm. It carries out the reaction (6R)-5,10-methylene-5,6,7,8-tetrahydrofolate + glycine + H2O = (6S)-5,6,7,8-tetrahydrofolate + L-serine. Its pathway is one-carbon metabolism; tetrahydrofolate interconversion. The protein operates within amino-acid biosynthesis; glycine biosynthesis; glycine from L-serine: step 1/1. Functionally, catalyzes the reversible interconversion of serine and glycine with tetrahydrofolate (THF) serving as the one-carbon carrier. This reaction serves as the major source of one-carbon groups required for the biosynthesis of purines, thymidylate, methionine, and other important biomolecules. Also exhibits THF-independent aldolase activity toward beta-hydroxyamino acids, producing glycine and aldehydes, via a retro-aldol mechanism. The protein is Serine hydroxymethyltransferase of Lawsonia intracellularis (strain PHE/MN1-00).